The following is a 727-amino-acid chain: Ankyrin repeat domain-containing protein 6 (727 aa).

ANK repeat units lie at residues 9–38, 41–70, 74–103, 107–136, 140–169, 173–202, 206–235, and 239–268; these read ALSE…RVAV, HGRT…DLDV, GDQT…ALDR, DGNT…NVLA, AGNT…RADL, AGDT…SVHE, AGDT…DTTI, and AGQT…VLRF. Residues 277-386 are disordered; sequence KRERLKEERR…HRCSSPPPPH (110 aa). Basic and acidic residues predominate over residues 280–296; it reads RLKEERRAQSVPRDEVA. Positions 298-312 are enriched in polar residues; it reads SKGSVSAGDTPSSEQ. Residues 314-324 are compositionally biased toward basic and acidic residues; it reads VARKEEAREEF. Positions 363–379 are enriched in basic residues; it reads KNLHAHNHPKKRNRHRC. Residues 417 to 446 are a coiled coil; sequence LINKLENQLEATVEEIKAELGSVQDKMNTK. The span at 548 to 557 shows a compositional bias: low complexity; sequence PAAASDSSPP. 2 disordered regions span residues 548–586 and 601–657; these read PAAA…CTGS and NEAA…TGPH. Polar residues predominate over residues 566-584; that stretch reads LNSTATQRLQQELSSSDCT. Over residues 622 to 633 the composition is skewed to basic residues; that stretch reads KSGKSGPTRHRA. Residues 682-727 adopt a coiled-coil conformation; sequence WYERKIEEARSQANQKAQQDKATLKEHIKSLEEELAKLRTRVQKEN.

In terms of assembly, interacts with AXN1, AXN2 and CSNK1E/CKI-epsilon.

Its function is as follows. Recruits CKI-epsilon to the beta-catenin degradation complex that consists of AXN1 or AXN2 and GSK3-beta and allows efficient phosphorylation of beta-catenin, thereby inhibiting beta-catenin/Tcf signals. The protein is Ankyrin repeat domain-containing protein 6 (ANKRD6) of Homo sapiens (Human).